The following is a 327-amino-acid chain: Movement protein (327 aa).

Residues 297–327 (SASSSNTENELARVSQNIDLLKNKLKEICGE) are a coiled coil.

The protein belongs to the caulimoviridae movement protein family. As to quaternary structure, homotrimer, through the coiled-coil domain. Interacts with VAP. May interact (via N-terminus) with host prenylated Rab acceptor protein 1D (PRA1D).

The protein resides in the host cell junction. It localises to the host plasmodesma. In terms of biological role, transports viral genome to neighboring plant cells directly through plasmosdesmata, without any budding. The movement protein allows efficient cell to cell propagation, by bypassing the host cell wall barrier. Acts by forming tubules structures that increase the size exclusion limit (SEL) of plasmodesmata, thereby allowing viral ribonucleocapsids to spread directly to neighboring cells. The chain is Movement protein from Arabidopsis thaliana (Mouse-ear cress).